Consider the following 506-residue polypeptide: Maturase K (506 aa).

The protein belongs to the intron maturase 2 family. MatK subfamily.

Its subcellular location is the plastid. The protein resides in the chloroplast. Usually encoded in the trnK tRNA gene intron. Probably assists in splicing its own and other chloroplast group II introns. The polypeptide is Maturase K (Phyllodoce caerulea (Blue mountain heath)).